The primary structure comprises 450 residues: tRNA modification GTPase MnmE (450 aa).

Residues R25, E86, and R126 each coordinate (6S)-5-formyl-5,6,7,8-tetrahydrofolate. The TrmE-type G domain occupies 221–373 (GLRVALVGRP…LVQALLERCG (153 aa)). N231 contributes to the K(+) binding site. GTP is bound by residues 231-236 (NVGKSS), 250-256 (TELPGTT), 275-278 (DTAG), and 336-339 (NKAD). Residue S235 participates in Mg(2+) binding. K(+) is bound by residues T250, L252, and T255. T256 is a binding site for Mg(2+). K450 contacts (6S)-5-formyl-5,6,7,8-tetrahydrofolate.

Belongs to the TRAFAC class TrmE-Era-EngA-EngB-Septin-like GTPase superfamily. TrmE GTPase family. As to quaternary structure, homodimer. Heterotetramer of two MnmE and two MnmG subunits. The cofactor is K(+).

It localises to the cytoplasm. Functionally, exhibits a very high intrinsic GTPase hydrolysis rate. Involved in the addition of a carboxymethylaminomethyl (cmnm) group at the wobble position (U34) of certain tRNAs, forming tRNA-cmnm(5)s(2)U34. The sequence is that of tRNA modification GTPase MnmE from Parasynechococcus marenigrum (strain WH8102).